A 275-amino-acid polypeptide reads, in one-letter code: NH(3)-dependent NAD(+) synthetase (275 aa).

ATP is bound at residue 46 to 53 (GISGGQDS). Asp-52 contacts Mg(2+). Arg-140 lines the deamido-NAD(+) pocket. An ATP-binding site is contributed by Thr-160. Glu-165 contributes to the Mg(2+) binding site. Deamido-NAD(+) is bound by residues Lys-173 and Asp-180. 2 residues coordinate ATP: Lys-189 and Thr-211. 260–261 (HK) provides a ligand contact to deamido-NAD(+).

It belongs to the NAD synthetase family. Homodimer.

The catalysed reaction is deamido-NAD(+) + NH4(+) + ATP = AMP + diphosphate + NAD(+) + H(+). It functions in the pathway cofactor biosynthesis; NAD(+) biosynthesis; NAD(+) from deamido-NAD(+) (ammonia route): step 1/1. Its function is as follows. Catalyzes the ATP-dependent amidation of deamido-NAD to form NAD. Uses ammonia as a nitrogen source. This is NH(3)-dependent NAD(+) synthetase from Escherichia coli O7:K1 (strain IAI39 / ExPEC).